We begin with the raw amino-acid sequence, 330 residues long: Probable cell division protein WhiA (330 aa).

The segment at residues 275-308 (SLDELGRLSDPPLTKDAIAGRIRRLLAMADRRAE) is a DNA-binding region (H-T-H motif).

Belongs to the WhiA family.

Involved in cell division and chromosome segregation. This chain is Probable cell division protein WhiA, found in Kocuria rhizophila (strain ATCC 9341 / DSM 348 / NBRC 103217 / DC2201).